The sequence spans 440 residues: Phosphoglycerate kinase, glycosomal (440 aa).

Residues Val23, Asp24, Phe25, Asn26, Arg39, Ser61, His62, Gly64, Arg65, Arg135, His171, and Arg172 each coordinate (2R)-3-phosphoglycerate. Gly217 serves as a coordination point for CDP. Ala218 serves as a coordination point for ADP. Ala218 and Lys219 together coordinate AMP. Ala218 is a binding site for ATP. Residue Ala218 coordinates Mg(2+). Lys219 serves as a coordination point for (2R)-3-phosphoglycerate. Residue Asp222 participates in CDP binding. Asp222 is a binding site for Mg(2+). Residues Lys223 and Gly241 each contribute to the ADP site. Residue Lys223 participates in AMP binding. Position 241 (Gly241) interacts with CDP. 2 residues coordinate AMP: Ala242 and Ala314. Positions 242 and 314 each coordinate ATP. The ADP site is built by Ala314 and Asn338. Residues Gly339 and Phe344 each coordinate CDP. ADP-binding residues include Phe344, Glu345, Asp377, and Ser378. Glu345 contacts AMP. ATP contacts are provided by Asp377 and Ser378. Asp377 contributes to the Mg(2+) binding site.

The protein belongs to the phosphoglycerate kinase family. In terms of assembly, monomer. It depends on Mg(2+) as a cofactor.

It is found in the glycosome. The catalysed reaction is (2R)-3-phosphoglycerate + ATP = (2R)-3-phospho-glyceroyl phosphate + ADP. Its pathway is carbohydrate degradation; glycolysis; pyruvate from D-glyceraldehyde 3-phosphate: step 2/5. The protein is Phosphoglycerate kinase, glycosomal of Trypanosoma brucei brucei.